Reading from the N-terminus, the 406-residue chain is MVLSQRQREELNKAIADYLRSNGYESALEAFQKEAEMPGEIEKKYTGLLEKKWTSVIRLQKKVMDLEAKLAEAEKEFQSGGPNKKERSPSEWIPRPPARYSLSGHRSPITRVLFHPVYSVMVSASEDATIKIWDYETGDFERTLKGHTDAVQDVSFDQQGKLLASCSADMTIKLWDFQTFENIKTMHGHDHNVSSVHFMPNGDFLISASRDKTIKMWELATGYCVKTFTGHREWVRTVRVNQDGSLLASCSNDQTVRVWVVANKECKAELREHEHVVECIAWAPESCNGHVSEVMGAEKKGRSGPFLLSGSRDKTIKMWDISTGVCIMTLVGHDNWVRGVVWHPGGKYIISASDDKTIRVWDYKNKRCQKTLEAHQHFCTSIDFHRSAPYVITGSVDQTVKVWECR.

The LisH domain occupies 7-39 (QREELNKAIADYLRSNGYESALEAFQKEAEMPG). Residues 54–81 (TSVIRLQKKVMDLEAKLAEAEKEFQSGG) adopt a coiled-coil conformation. Positions 74 to 89 (EKEFQSGGPNKKERSP) are enriched in basic and acidic residues. Residues 74–99 (EKEFQSGGPNKKERSPSEWIPRPPAR) form a disordered region. 7 WD repeats span residues 104-145 (GHRS…RTLK), 146-185 (GHTD…NIKT), 188-227 (GHDH…CVKT), 230-269 (GHRE…CKAE), 272-329 (EHEH…CIMT), 332-371 (GHDN…CQKT), and 374-406 (AHQH…WECR).

This sequence belongs to the WD repeat LIS1/nudF family.

The protein localises to the cytoplasm. It localises to the cytoskeleton. The protein resides in the microtubule organizing center. Its subcellular location is the centrosome. Its function is as follows. Positively regulates the activity of the minus-end directed microtubule motor protein dynein. May enhance dynein-mediated microtubule sliding by targeting dynein to the microtubule plus end. Required for several dynein- and microtubule-dependent processes. The chain is Lissencephaly-1 homolog from Branchiostoma floridae (Florida lancelet).